Consider the following 204-residue polypeptide: CASP-like protein 4B4 (204 aa).

Residues 1–60 (MSAAVAASSGAPAADVEKGAAAADANVDGGGAPAAAAASGEGVVSAVVRRWRRQDLLEKS) lie on the Cytoplasmic side of the membrane. Residues 61 to 81 (GSALRVAAWAFSLLAFVVMGA) form a helical membrane-spanning segment. At 82-98 (NDHGDWRQFEHYEEYRY) the chain is on the extracellular side. A helical transmembrane segment spans residues 99 to 119 (VVAIGVLAFIYTTLQLVRHGV). At 120–130 (RLTGGQDLQGK) the chain is on the cytoplasmic side. A helical membrane pass occupies residues 131-151 (VAVLVDFAGDQVTAYLLMSAV). Residues 152–175 (SAAIPITNRMREGADNVFTDSSAA) lie on the Extracellular side of the membrane. Residues 176-196 (SISMAFFAFLCLALSALVSGF) form a helical membrane-spanning segment. Topologically, residues 197–204 (KLAKQTYI) are cytoplasmic.

It belongs to the Casparian strip membrane proteins (CASP) family. As to quaternary structure, homodimer and heterodimers.

The protein resides in the cell membrane. This Oryza sativa subsp. japonica (Rice) protein is CASP-like protein 4B4.